A 549-amino-acid polypeptide reads, in one-letter code: CDK5RAP3 protein homolog (549 aa).

Short sequence motifs (shuffled ATG8-binding motif) lie at residues 274-277 (IDWD), 285-288 (IDWD), and 333-336 (ISWD).

Belongs to the CDK5RAP3 family. As to quaternary structure, substrate adapter component of the UFM1 ribosome E3 ligase (UREL) complex. Interacts with ATG8 family proteins.

In terms of biological role, substrate adapter of E3 ligase complexes mediating ufmylation, the covalent attachment of the ubiquitin-like modifier UFM1 to substrate proteins, and which is involved in various processes, such as ribosome recycling and reticulophagy (also called ER-phagy). The chain is CDK5RAP3 protein homolog from Arabidopsis thaliana (Mouse-ear cress).